A 528-amino-acid polypeptide reads, in one-letter code: 4-nitrophenol 4-monooxygenase/4-nitrocatechol 2-monooxygenase, oxygenase component (528 aa).

100 to 104 (RPPAG) contacts substrate. FAD is bound by residues 153–155 (PMF), 159–162 (QFDR), and Thr194. A substrate-binding site is contributed by 205-206 (GN). 461-464 (TMQR) is a binding site for FAD.

This sequence belongs to the FADH(2)-utilizing monooxygenase family. The 4-NP/4-NCA monooxygenase is composed of an oxygenase component NpcA and a reductase component NpcB. FAD serves as cofactor.

It catalyses the reaction 4-nitrophenol + NADH + O2 + H(+) = 4-nitrocatechol + NAD(+) + H2O. The catalysed reaction is 4-nitrocatechol + NADPH + O2 = 2-hydroxy-1,4-benzoquinone + nitrite + NADP(+) + H2O. The enzyme catalyses 4-nitrocatechol + NADH + O2 = 2-hydroxy-1,4-benzoquinone + nitrite + NAD(+) + H2O. It participates in aromatic compound metabolism. Its pathway is xenobiotic degradation. Its activity is regulated as follows. Inhibited by methimazole. Its function is as follows. Involved in the degradation of para-nitrophenol (4-NP). Catalyzes both the initial hydroxylation of 4-NP to produce 4-nitrocatechol (4-NCA) and the subsequent oxidative release of the nitro group from 4-NCA to produce 2-hydroxy-1,4-benzoquinone. It can also use 4-nitroresorcinol as substrate with a rate of nitrite release similar to that observed with the two physiological substrates, 4-PN and 4-NCA. The sequence is that of 4-nitrophenol 4-monooxygenase/4-nitrocatechol 2-monooxygenase, oxygenase component (npcA) from Rhodococcus opacus (Nocardia opaca).